The primary structure comprises 506 residues: Mitogen-activated protein kinase 13 (506 aa).

One can recognise a Protein kinase domain in the interval 13–304; it reads YQIQEVVGKG…AEEALADPYF (292 aa). Residues 19–27 and lysine 42 contribute to the ATP site; that span reads VGKGSYGVV. Aspartate 139 serves as the catalytic Proton acceptor. The residue at position 175 (threonine 175) is a Phosphothreonine. The short motif at 175–177 is the TXY element; the sequence is TDY. Phosphotyrosine is present on tyrosine 177. Residues 384-421 form a disordered region; it reads YSRGERSTPLRRQHASLPRERVCSSVDSNNQDSDNEER.

Belongs to the protein kinase superfamily. CMGC Ser/Thr protein kinase family. MAP kinase subfamily. Post-translationally, dually phosphorylated on Thr-175 and Tyr-177, which activates the enzyme.

The enzyme catalyses L-seryl-[protein] + ATP = O-phospho-L-seryl-[protein] + ADP + H(+). It catalyses the reaction L-threonyl-[protein] + ATP = O-phospho-L-threonyl-[protein] + ADP + H(+). Its activity is regulated as follows. Activated by threonine and tyrosine phosphorylation. The protein is Mitogen-activated protein kinase 13 (MPK13) of Oryza sativa subsp. indica (Rice).